The following is a 919-amino-acid chain: Isoleucine--tRNA ligase (919 aa).

Positions 57–67 match the 'HIGH' region motif; it reads PYANGHIHIGT. Glu553 provides a ligand contact to L-isoleucyl-5'-AMP. A 'KMSKS' region motif is present at residues 594–598; that stretch reads KMSKS. Lys597 is a binding site for ATP. Cys887, Cys890, Cys907, and Cys910 together coordinate Zn(2+).

The protein belongs to the class-I aminoacyl-tRNA synthetase family. IleS type 1 subfamily. Monomer. Requires Zn(2+) as cofactor.

It localises to the cytoplasm. It catalyses the reaction tRNA(Ile) + L-isoleucine + ATP = L-isoleucyl-tRNA(Ile) + AMP + diphosphate. Its function is as follows. Catalyzes the attachment of isoleucine to tRNA(Ile). As IleRS can inadvertently accommodate and process structurally similar amino acids such as valine, to avoid such errors it has two additional distinct tRNA(Ile)-dependent editing activities. One activity is designated as 'pretransfer' editing and involves the hydrolysis of activated Val-AMP. The other activity is designated 'posttransfer' editing and involves deacylation of mischarged Val-tRNA(Ile). The protein is Isoleucine--tRNA ligase of Thermotoga petrophila (strain ATCC BAA-488 / DSM 13995 / JCM 10881 / RKU-1).